The primary structure comprises 222 residues: N-(5'-phosphoribosyl)anthranilate isomerase (222 aa).

The protein belongs to the TrpF family.

The catalysed reaction is N-(5-phospho-beta-D-ribosyl)anthranilate = 1-(2-carboxyphenylamino)-1-deoxy-D-ribulose 5-phosphate. It participates in amino-acid biosynthesis; L-tryptophan biosynthesis; L-tryptophan from chorismate: step 3/5. This chain is N-(5'-phosphoribosyl)anthranilate isomerase, found in Xanthomonas campestris pv. campestris (strain 8004).